The following is a 95-amino-acid chain: Small ribosomal subunit protein bS20c (95 aa).

The protein belongs to the bacterial ribosomal protein bS20 family.

The protein localises to the plastid. Its subcellular location is the cyanelle. Functionally, binds directly to 16S ribosomal RNA. The chain is Small ribosomal subunit protein bS20c (rps20) from Cyanophora paradoxa.